The following is a 217-amino-acid chain: MKSAVMAVACAAAPGFRGPSAFNGAALTTSAKACSAMKMSFESEIGAQAPLGFWDPLGLLADADQERFERLRYVEVKHGRIAMLAIAGHLTQQNTRLPGMLSNSANLSFADMPNGVAALSKIPPAGLAQIFAFIGFLELAVMKNVEGSFPGDFTLGGNPFGASWDAMSEETQASKRAIELNNGRAAQMGILALMVHEELNNKPYVINDLVGASYTFN.

A chloroplast-targeting transit peptide spans 1–39 (MKSAVMAVACAAAPGFRGPSAFNGAALTTSAKACSAMKM). 3 helical membrane-spanning segments follow: residues 81–101 (IAML…PGML), 122–142 (IPPA…LAVM), and 183–203 (GRAA…NNKP).

Belongs to the fucoxanthin chlorophyll protein family. The LHC complex of chromophytic algae is composed of fucoxanthin, chlorophyll A and C bound non-covalently by fucoxanthin chlorophyll proteins (FCPs). The ratio of pigments in this LHC is; fucoxanthin: chlorophyll C: chlorophyll A; (0.6-1): (0.1-0.3): (1).

It is found in the plastid. It localises to the chloroplast thylakoid membrane. The light-harvesting complex (LHC) functions as a light receptor, it captures and delivers excitation energy to photosystems with which it is closely associated. Energy is transferred from the carotenoid and chlorophyll C (or B) to chlorophyll A and the photosynthetic reaction centers where it is used to synthesize ATP and reducing power. This Macrocystis pyrifera (Giant kelp) protein is Fucoxanthin-chlorophyll a-c binding protein B, chloroplastic (FCPB).